A 254-amino-acid chain; its full sequence is Alcohol dehydrogenase (254 aa).

10–33 (FVAGLGGIGLDTSKGIVKAGPKNL) is a binding site for NAD(+). Residue Ser138 coordinates substrate. The active-site Proton acceptor is Tyr151.

It belongs to the short-chain dehydrogenases/reductases (SDR) family. In terms of assembly, homodimer.

The enzyme catalyses a primary alcohol + NAD(+) = an aldehyde + NADH + H(+). The catalysed reaction is a secondary alcohol + NAD(+) = a ketone + NADH + H(+). The chain is Alcohol dehydrogenase (Adh) from Drosophila immigrans (Fruit fly).